The following is a 30-amino-acid chain: Protamine-YII (30 aa).

The segment at proline 1–arginine 30 is disordered.

As to expression, testis.

The protein resides in the nucleus. It localises to the chromosome. In terms of biological role, protamines substitute for histones in the chromatin of sperm during the haploid phase of spermatogenesis. They compact sperm DNA into a highly condensed, stable and inactive complex. This chain is Protamine-YII, found in Clupea harengus (Atlantic herring).